Here is a 497-residue protein sequence, read N- to C-terminus: MPDNTIRSNSEVVLIGAGIMSATLGLILKELQPDIKIEIYERLDVAAAESSDAWNNAGTGHSAFCELNYTPEKADGSIDPKKAISIAESFEISRQFWSYLVQQNKVPSPENFIKSVPHMSFVWGDKNVEYLRKRFEALQSNPIFADMTFSTDFNQLKEWMPLVMEGREADEKLAATHMEIGTDVNFGALTRSMFNYLEKLDGVTLYFNHEVKKLKQREDKSWRIKITDLSTGQKRKAYTKFVFIGAGGGSLPLLEKADVPEGHGYGGFPVSGQWLKCTNPEVIAKHQAKVYGKASVGAPPMSVPHIDTRVIDGEKALLFGPFAGFSTRFLKNGSYLDLPLSIKANNLIPMLSAGFHNIPLTKYLIEQVRQSPKDRMKALREYLPTARSKDWKLEKAGQRVQVIKKGKDGGGVLEFGTEVINTHDGTLAVLLGASPGASTAVAIMVDLISRCFTNQIKTPEWEAKMKEMIPSYGKTLNDKPELLAEMRKHTAEVLKIK.

Belongs to the MQO family. It depends on FAD as a cofactor.

The catalysed reaction is (S)-malate + a quinone = a quinol + oxaloacetate. It functions in the pathway carbohydrate metabolism; tricarboxylic acid cycle; oxaloacetate from (S)-malate (quinone route): step 1/1. This is Probable malate:quinone oxidoreductase from Flavobacterium johnsoniae (strain ATCC 17061 / DSM 2064 / JCM 8514 / BCRC 14874 / CCUG 350202 / NBRC 14942 / NCIMB 11054 / UW101) (Cytophaga johnsonae).